We begin with the raw amino-acid sequence, 181 residues long: Ribosome-recycling factor (181 aa).

This sequence belongs to the RRF family.

It localises to the cytoplasm. Its function is as follows. Responsible for the release of ribosomes from messenger RNA at the termination of protein biosynthesis. May increase the efficiency of translation by recycling ribosomes from one round of translation to another. The chain is Ribosome-recycling factor from Tropheryma whipplei (strain TW08/27) (Whipple's bacillus).